Consider the following 289-residue polypeptide: Oxaloacetate decarboxylase (289 aa).

Substrate is bound at residue Ser50. Asp88 provides a ligand contact to Mg(2+). Residues Arg159 and His235 each coordinate substrate.

The protein belongs to the isocitrate lyase/PEP mutase superfamily. Oxaloacetate decarboxylase family. In terms of assembly, homotetramer; dimer of dimers. Mg(2+) serves as cofactor.

The enzyme catalyses oxaloacetate + H(+) = pyruvate + CO2. In terms of biological role, catalyzes the decarboxylation of oxaloacetate into pyruvate. Seems to play a role in maintaining cellular concentrations of bicarbonate and pyruvate. The sequence is that of Oxaloacetate decarboxylase from Pseudomonas entomophila (strain L48).